A 174-amino-acid polypeptide reads, in one-letter code: Adenine phosphoribosyltransferase (174 aa).

Belongs to the purine/pyrimidine phosphoribosyltransferase family. Homodimer.

Its subcellular location is the cytoplasm. It carries out the reaction AMP + diphosphate = 5-phospho-alpha-D-ribose 1-diphosphate + adenine. It participates in purine metabolism; AMP biosynthesis via salvage pathway; AMP from adenine: step 1/1. Catalyzes a salvage reaction resulting in the formation of AMP, that is energically less costly than de novo synthesis. This Mycolicibacterium vanbaalenii (strain DSM 7251 / JCM 13017 / BCRC 16820 / KCTC 9966 / NRRL B-24157 / PYR-1) (Mycobacterium vanbaalenii) protein is Adenine phosphoribosyltransferase.